The sequence spans 331 residues: PIN2/TERF1-interacting telomerase inhibitor 1 (331 aa).

3 disordered regions span residues 1–28, 156–175, and 197–331; these read MSML…DDSK, AQDG…LTTT, and SKSQ…KVSR. In terms of domain architecture, G-patch spans 26-72; that stretch reads DSKFGQKMLEKMGWSKGKGLGAQEQGATEHIKVKVKNNHLGLGATNN. Phosphoserine is present on Ser233. Basic residues predominate over residues 236–246; that stretch reads HKAKRHKKKKR. Residues 247 to 261 show a composition bias toward basic and acidic residues; the sequence is VEAERGPAAKKRDQV. The telomerase inhibitory domain (TID) stretch occupies residues 254-328; the sequence is AAKKRDQVEL…DSAPVKKKKK (75 aa). 3 positions are modified to phosphoserine: Ser269, Ser274, and Ser277. The short motif at 291 to 301 is the TBM element; it reads QDDVPKPRKRR. The segment covering 297 to 306 has biased composition (basic residues); sequence PRKRRAKKTL.

Belongs to the PINX1 family. Interacts with MCRS1, TERT, TERF1, NCL/nucleolin, and the telomerase RNA.

Its subcellular location is the nucleus. It is found in the nucleolus. The protein localises to the chromosome. It localises to the telomere. The protein resides in the centromere. Its subcellular location is the kinetochore. Its function is as follows. Microtubule-binding protein essential for faithful chromosome segregation. Mediates TRF1 and TERT accumulation in nucleolus and enhances TRF1 binding to telomeres. Inhibits telomerase activity. May inhibit cell proliferation and act as tumor suppressor. The chain is PIN2/TERF1-interacting telomerase inhibitor 1 from Rattus norvegicus (Rat).